We begin with the raw amino-acid sequence, 464 residues long: ATP synthase subunit beta (464 aa).

153–160 (GGAGVGKT) lines the ATP pocket.

It belongs to the ATPase alpha/beta chains family. In terms of assembly, F-type ATPases have 2 components, CF(1) - the catalytic core - and CF(0) - the membrane proton channel. CF(1) has five subunits: alpha(3), beta(3), gamma(1), delta(1), epsilon(1). CF(0) has three main subunits: a(1), b(2) and c(9-12). The alpha and beta chains form an alternating ring which encloses part of the gamma chain. CF(1) is attached to CF(0) by a central stalk formed by the gamma and epsilon chains, while a peripheral stalk is formed by the delta and b chains.

It localises to the cell inner membrane. The catalysed reaction is ATP + H2O + 4 H(+)(in) = ADP + phosphate + 5 H(+)(out). Produces ATP from ADP in the presence of a proton gradient across the membrane. The catalytic sites are hosted primarily by the beta subunits. This is ATP synthase subunit beta from Burkholderia vietnamiensis (strain G4 / LMG 22486) (Burkholderia cepacia (strain R1808)).